The following is a 177-amino-acid chain: B-phycoerythrin beta chain (177 aa).

(2R,3E)-phycoerythrobilin is bound by residues lysine 28, asparagine 35, aspartate 39, cysteine 50, aspartate 54, cysteine 61, asparagine 72, 77-78 (RR), cysteine 82, arginine 129, 147-148 (SQ), 154-158 (PQGDC), and cysteine 158. Asparagine 72 carries the post-translational modification N4-methylasparagine.

It belongs to the phycobiliprotein family. As to quaternary structure, heterotetramer of 2 different alpha chains and 2 identical beta chains. The subunit composition could comprise any combination of 2 out of 4 different alpha units with an invariant beta unit. Post-translationally, contains three covalently linked phycoerythrobilin chromophores.

The protein localises to the plastid. The protein resides in the chloroplast thylakoid membrane. Functionally, light-harvesting photosynthetic tetrapyrrole chromophore-protein from the phycobiliprotein complex. This is B-phycoerythrin beta chain (cpeB) from Rhodomonas sp. (strain CS 24) (Chroomonas sp. (strain CS24)).